Here is a 329-residue protein sequence, read N- to C-terminus: Lipoyl synthase (329 aa).

Positions 1 to 23 (MTDLTATPAPAEPAASAYDPTAK) are disordered. Positions 76, 81, 87, 102, 106, 109, and 316 each coordinate [4Fe-4S] cluster. Residues 87–305 (CFGKGTATFM…EEEAYKMGFT (219 aa)) enclose the Radical SAM core domain.

This sequence belongs to the radical SAM superfamily. Lipoyl synthase family. [4Fe-4S] cluster is required as a cofactor.

The protein localises to the cytoplasm. It carries out the reaction [[Fe-S] cluster scaffold protein carrying a second [4Fe-4S](2+) cluster] + N(6)-octanoyl-L-lysyl-[protein] + 2 oxidized [2Fe-2S]-[ferredoxin] + 2 S-adenosyl-L-methionine + 4 H(+) = [[Fe-S] cluster scaffold protein] + N(6)-[(R)-dihydrolipoyl]-L-lysyl-[protein] + 4 Fe(3+) + 2 hydrogen sulfide + 2 5'-deoxyadenosine + 2 L-methionine + 2 reduced [2Fe-2S]-[ferredoxin]. It participates in protein modification; protein lipoylation via endogenous pathway; protein N(6)-(lipoyl)lysine from octanoyl-[acyl-carrier-protein]: step 2/2. Functionally, catalyzes the radical-mediated insertion of two sulfur atoms into the C-6 and C-8 positions of the octanoyl moiety bound to the lipoyl domains of lipoate-dependent enzymes, thereby converting the octanoylated domains into lipoylated derivatives. This is Lipoyl synthase from Burkholderia mallei (strain NCTC 10247).